The following is a 107-amino-acid chain: uncharacterized protein (107 aa).

It localises to the mitochondrion. This is an uncharacterized protein from Arabidopsis thaliana (Mouse-ear cress).